Consider the following 291-residue polypeptide: ATP synthase gamma chain (291 aa).

The protein belongs to the ATPase gamma chain family. In terms of assembly, F-type ATPases have 2 components, CF(1) - the catalytic core - and CF(0) - the membrane proton channel. CF(1) has five subunits: alpha(3), beta(3), gamma(1), delta(1), epsilon(1). CF(0) has three main subunits: a, b and c.

It is found in the cell inner membrane. Its function is as follows. Produces ATP from ADP in the presence of a proton gradient across the membrane. The gamma chain is believed to be important in regulating ATPase activity and the flow of protons through the CF(0) complex. The protein is ATP synthase gamma chain of Neisseria meningitidis serogroup C / serotype 2a (strain ATCC 700532 / DSM 15464 / FAM18).